The primary structure comprises 635 residues: UvrABC system protein C (635 aa).

Positions 20-97 (ERSGVYRMFD…IKKFQPKFNI (78 aa)) constitute a GIY-YIG domain. Residues 207 to 242 (KELQENLSKKMEELSEQMRFEEAAEIRDRIKALSYV) form the UVR domain.

The protein belongs to the UvrC family. In terms of assembly, interacts with UvrB in an incision complex.

It is found in the cytoplasm. The UvrABC repair system catalyzes the recognition and processing of DNA lesions. UvrC both incises the 5' and 3' sides of the lesion. The N-terminal half is responsible for the 3' incision and the C-terminal half is responsible for the 5' incision. The chain is UvrABC system protein C from Rickettsia bellii (strain RML369-C).